A 200-amino-acid chain; its full sequence is Large ribosomal subunit protein uL4 (200 aa).

The interval Ala-44–Gly-70 is disordered.

The protein belongs to the universal ribosomal protein uL4 family. Part of the 50S ribosomal subunit.

Its function is as follows. One of the primary rRNA binding proteins, this protein initially binds near the 5'-end of the 23S rRNA. It is important during the early stages of 50S assembly. It makes multiple contacts with different domains of the 23S rRNA in the assembled 50S subunit and ribosome. Protein L4 is a both a transcriptional repressor and a translational repressor protein. It regulates transcription of the S10 operon (to which L4 belongs) by causing premature termination of transcription within the S10 leader. L4 controls the translation of the S10 operon by binding to its mRNA. In terms of biological role, this protein when expressed in E.coli represses both transcription and translation of the endogenous S10 operon. As the M.morganii S10 leader can be regulated in vitro by the E.coli L4 protein this strongly suggests the endogenous protein controls its own S10 operon in a similar fashion. Functionally, forms part of the polypeptide exit tunnel. This is Large ribosomal subunit protein uL4 (rplD) from Morganella morganii (Proteus morganii).